We begin with the raw amino-acid sequence, 342 residues long: Predicted GPI-anchored protein 54 (342 aa).

The signal sequence occupies residues 1–16; sequence MRANYLLLLAATAVQA. Residues N25, N105, and N151 are each glycosylated (N-linked (GlcNAc...) asparagine). G314 carries the GPI-anchor amidated glycine lipid modification. Residues 315–342 constitute a propeptide, removed in mature form; sequence ASQSHPISSYSNYTISDYAPPISSYYSL. N326 carries an N-linked (GlcNAc...) asparagine glycan.

It is found in the cell membrane. The chain is Predicted GPI-anchored protein 54 (PGA54) from Candida albicans (strain SC5314 / ATCC MYA-2876) (Yeast).